The following is a 186-amino-acid chain: Testis-expressed protein 36 (186 aa).

A disordered region spans residues 1–52; it reads MTKGRRFNPPSDKDGRWFPHIGLTQKTPESITSATSKEPQSPHLPRQAEGKL. A compositionally biased stretch (polar residues) spans 24 to 39; it reads TQKTPESITSATSKEP.

This is Testis-expressed protein 36 (TEX36) from Homo sapiens (Human).